Here is an 818-residue protein sequence, read N- to C-terminus: Cation/H(+) antiporter 6A (818 aa).

13 helical membrane passes run 51 to 71, 88 to 110, 123 to 143, 156 to 176, 192 to 212, 222 to 242, 248 to 268, 288 to 308, 310 to 330, 340 to 360, 376 to 396, 409 to 429, and 438 to 458; these read NFWE…FFIW, FTYM…KSWI, VAET…GVTM, SVIG…TFRY, LIIF…LKDL, IALS…FFNA, LYGF…ICVV, FYLY…NKVI, LFGP…YPLG, FNLG…VDLL, IYEV…VTTI, FALA…YTYA, and EVFT…PMLL.

This sequence belongs to the monovalent cation:proton antiporter 2 (CPA2) transporter (TC 2.A.37) family. CHX (TC 2.A.37.4) subfamily. Preferentially expressed in pollen.

The protein localises to the membrane. In terms of biological role, may operate as a cation/H(+) antiporter. The chain is Cation/H(+) antiporter 6A (CHX6a) from Arabidopsis thaliana (Mouse-ear cress).